The chain runs to 110 residues: uncharacterized protein (110 aa).

Residues 1 to 16 (MSVKLKYDKIDQRNGD) show a composition bias toward basic and acidic residues. Disordered regions lie at residues 1 to 29 (MSVK…GNGN) and 73 to 100 (IKQQ…ESPN). Over residues 20 to 29 (GNHNNCGNGN) the composition is skewed to low complexity.

This is an uncharacterized protein from Dictyostelium discoideum (Social amoeba).